A 274-amino-acid polypeptide reads, in one-letter code: Leucyl/phenylalanyl-tRNA--protein transferase (274 aa).

It belongs to the L/F-transferase family.

It localises to the cytoplasm. The catalysed reaction is N-terminal L-lysyl-[protein] + L-leucyl-tRNA(Leu) = N-terminal L-leucyl-L-lysyl-[protein] + tRNA(Leu) + H(+). It carries out the reaction N-terminal L-arginyl-[protein] + L-leucyl-tRNA(Leu) = N-terminal L-leucyl-L-arginyl-[protein] + tRNA(Leu) + H(+). The enzyme catalyses L-phenylalanyl-tRNA(Phe) + an N-terminal L-alpha-aminoacyl-[protein] = an N-terminal L-phenylalanyl-L-alpha-aminoacyl-[protein] + tRNA(Phe). In terms of biological role, functions in the N-end rule pathway of protein degradation where it conjugates Leu, Phe and, less efficiently, Met from aminoacyl-tRNAs to the N-termini of proteins containing an N-terminal arginine or lysine. In Psychrobacter cryohalolentis (strain ATCC BAA-1226 / DSM 17306 / VKM B-2378 / K5), this protein is Leucyl/phenylalanyl-tRNA--protein transferase.